We begin with the raw amino-acid sequence, 132 residues long: Glycine cleavage system H protein (132 aa).

One can recognise a Lipoyl-binding domain in the interval 24-106 (IATIGLSAHA…YEEGWFIKVR (83 aa)). At Lys65 the chain carries N6-lipoyllysine.

Belongs to the GcvH family. As to quaternary structure, the glycine cleavage system is composed of four proteins: P, T, L and H. Requires (R)-lipoate as cofactor.

In terms of biological role, the glycine cleavage system catalyzes the degradation of glycine. The H protein shuttles the methylamine group of glycine from the P protein to the T protein. The protein is Glycine cleavage system H protein of Picosynechococcus sp. (strain ATCC 27264 / PCC 7002 / PR-6) (Agmenellum quadruplicatum).